The chain runs to 871 residues: Alanine--tRNA ligase (871 aa).

4 residues coordinate Zn(2+): His563, His567, Cys665, and His669.

It belongs to the class-II aminoacyl-tRNA synthetase family. Requires Zn(2+) as cofactor.

It localises to the cytoplasm. It catalyses the reaction tRNA(Ala) + L-alanine + ATP = L-alanyl-tRNA(Ala) + AMP + diphosphate. Its function is as follows. Catalyzes the attachment of alanine to tRNA(Ala) in a two-step reaction: alanine is first activated by ATP to form Ala-AMP and then transferred to the acceptor end of tRNA(Ala). Also edits incorrectly charged Ser-tRNA(Ala) and Gly-tRNA(Ala) via its editing domain. This chain is Alanine--tRNA ligase, found in Christiangramia forsetii (strain DSM 17595 / CGMCC 1.15422 / KT0803) (Gramella forsetii).